An 87-amino-acid chain; its full sequence is RNA-binding protein Hfq (87 aa).

Residues D9 to V68 form the Sm domain.

The protein belongs to the Hfq family. As to quaternary structure, homohexamer.

RNA chaperone that binds small regulatory RNA (sRNAs) and mRNAs to facilitate mRNA translational regulation in response to envelope stress, environmental stress and changes in metabolite concentrations. Also binds with high specificity to tRNAs. The polypeptide is RNA-binding protein Hfq (Teredinibacter turnerae (strain ATCC 39867 / T7901)).